We begin with the raw amino-acid sequence, 225 residues long: NAD(P)H-quinone oxidoreductase subunit K, chloroplastic (225 aa).

[4Fe-4S] cluster-binding residues include Cys-43, Cys-44, Cys-108, and Cys-139.

Belongs to the complex I 20 kDa subunit family. NDH is composed of at least 16 different subunits, 5 of which are encoded in the nucleus. The cofactor is [4Fe-4S] cluster.

It is found in the plastid. The protein resides in the chloroplast thylakoid membrane. It catalyses the reaction a plastoquinone + NADH + (n+1) H(+)(in) = a plastoquinol + NAD(+) + n H(+)(out). The enzyme catalyses a plastoquinone + NADPH + (n+1) H(+)(in) = a plastoquinol + NADP(+) + n H(+)(out). NDH shuttles electrons from NAD(P)H:plastoquinone, via FMN and iron-sulfur (Fe-S) centers, to quinones in the photosynthetic chain and possibly in a chloroplast respiratory chain. The immediate electron acceptor for the enzyme in this species is believed to be plastoquinone. Couples the redox reaction to proton translocation, and thus conserves the redox energy in a proton gradient. The sequence is that of NAD(P)H-quinone oxidoreductase subunit K, chloroplastic from Brachypodium distachyon (Purple false brome).